We begin with the raw amino-acid sequence, 401 residues long: Argininosuccinate synthase (401 aa).

ATP-binding positions include 10-18 (AYSGGVDTS) and Ala38. Position 89 (Tyr89) interacts with L-citrulline. Gly119 is a binding site for ATP. L-aspartate-binding residues include Thr121, Asn125, and Asp126. Asn125 is a binding site for L-citrulline. Positions 129, 177, 186, 262, and 274 each coordinate L-citrulline.

The protein belongs to the argininosuccinate synthase family. Type 1 subfamily. In terms of assembly, homotetramer.

Its subcellular location is the cytoplasm. The catalysed reaction is L-citrulline + L-aspartate + ATP = 2-(N(omega)-L-arginino)succinate + AMP + diphosphate + H(+). It participates in amino-acid biosynthesis; L-arginine biosynthesis; L-arginine from L-ornithine and carbamoyl phosphate: step 2/3. The protein is Argininosuccinate synthase of Prochlorococcus marinus (strain MIT 9313).